Here is a 493-residue protein sequence, read N- to C-terminus: Probable cytochrome P450 508A2 (493 aa).

The helical transmembrane segment at 1–21 threads the bilayer; the sequence is MIFGIIVYLFLIYILHNAYSK. Heme is bound at residue Cys439.

The protein belongs to the cytochrome P450 family. It depends on heme as a cofactor.

The protein resides in the membrane. In Dictyostelium discoideum (Social amoeba), this protein is Probable cytochrome P450 508A2 (cyp508A2-1).